Here is a 133-residue protein sequence, read N- to C-terminus: DNA-directed RNA polymerase subunit omega (133 aa).

This sequence belongs to the RNA polymerase subunit omega family. As to quaternary structure, the RNAP catalytic core consists of 2 alpha, 1 beta, 1 beta' and 1 omega subunit. When a sigma factor is associated with the core the holoenzyme is formed, which can initiate transcription.

It carries out the reaction RNA(n) + a ribonucleoside 5'-triphosphate = RNA(n+1) + diphosphate. Functionally, promotes RNA polymerase assembly. Latches the N- and C-terminal regions of the beta' subunit thereby facilitating its interaction with the beta and alpha subunits. The protein is DNA-directed RNA polymerase subunit omega of Brucella canis (strain ATCC 23365 / NCTC 10854 / RM-666).